The sequence spans 349 residues: MSSLSGKVQTVLGLVEPSQLGRTLTHEHLTMTFDSFYCPPPPCHEVTSKEPIMMKNLFWIQKNPYSHRENLQLNQEVGAIREELLYFKAKGGGALVENTTTGLSRDVHTLKWLAEQTGVHIIAGAGFYVDATHSAATRAMSVEQLTDVLINEILHGADGTSIKCGVIGEIGCSWPLTDSERKILEATAHAQAQLGCPVIIHPGRNPGAPFQIIRILQEAGADISKTVMSHLDRTIFDKKELLEFAQLGCYLEYDLFGTELLNYQLSPDIDMPDDNKRIRRVHFLVDEGYEDRILMAHDIHTKHRLMKYGGHGYSHILTNIVPKMLLRGLTERVLDKILIENPKQWLTFK.

Residues H26, H28, E169, H201, H230, and D298 each contribute to the a divalent metal cation site.

It belongs to the metallo-dependent hydrolases superfamily. Phosphotriesterase family. Requires a divalent metal cation as cofactor. In terms of tissue distribution, expressed in the kidney, liver and brainstem.

The protein localises to the cytoplasm. Its subcellular location is the cytosol. The enzyme catalyses N-acetyltaurine + H2O = taurine + acetate. It carries out the reaction N-propanoyltaurine + H2O = propanoate + taurine. The catalysed reaction is N-acetyl-L-methionine + H2O = L-methionine + acetate. It catalyses the reaction N-acetyl-L-isoleucine + H2O = L-isoleucine + acetate. The enzyme catalyses N-acetyl-L-leucine + H2O = L-leucine + acetate. It carries out the reaction N-acetyl-L-valine + H2O = L-valine + acetate. Its function is as follows. N-acetyltaurine hydrolase that regulates feeding by catalyzing the hydrolysis of N-acetyltaurine into taurine and acetate. N-acetyltaurine has anorexigenic and anti-obesity effects that are dependent on GFRAL receptor and GDF15. PTER also acts on other N-acetyl amino acids (Met, Ile, Leu, Val) and N-propionyltaurine, but at lower rates. This chain is N-acetyltaurine hydrolase, found in Mus musculus (Mouse).